A 345-amino-acid chain; its full sequence is Phosphoribosylformylglycinamidine cyclo-ligase (345 aa).

It belongs to the AIR synthase family.

Its subcellular location is the cytoplasm. It catalyses the reaction 2-formamido-N(1)-(5-O-phospho-beta-D-ribosyl)acetamidine + ATP = 5-amino-1-(5-phospho-beta-D-ribosyl)imidazole + ADP + phosphate + H(+). The protein operates within purine metabolism; IMP biosynthesis via de novo pathway; 5-amino-1-(5-phospho-D-ribosyl)imidazole from N(2)-formyl-N(1)-(5-phospho-D-ribosyl)glycinamide: step 2/2. In Actinobacillus succinogenes (strain ATCC 55618 / DSM 22257 / CCUG 43843 / 130Z), this protein is Phosphoribosylformylglycinamidine cyclo-ligase.